The chain runs to 715 residues: Probable serine/threonine-protein kinase mkcE (715 aa).

3 disordered regions span residues 1–125, 228–330, and 366–385; these read MQKI…SQHQ, QLQQ…TTTT, and GVDN…PIQP. Over residues 42 to 53 the composition is skewed to gly residues; that stretch reads YDGGGSGSGSGG. 2 stretches are compositionally biased toward low complexity: residues 54-70 and 80-125; these read SSSN…TGGN and SPSN…SQHQ. Residues 207-241 adopt a coiled-coil conformation; that stretch reads TGKKNFQQQQLQQLQQQQQQQQLQQQQHQQHNHQI. The span at 367-378 shows a compositional bias: low complexity; sequence VDNLSSTTTSLS. A Protein kinase domain is found at 427–683; the sequence is RIGENAEVKG…PTQLLQHPFI (257 aa). Residues 433–441 and lysine 459 contribute to the ATP site; that span reads EVKGAFGTV. Aspartate 550 serves as the catalytic Proton acceptor.

Belongs to the protein kinase superfamily. STE Ser/Thr protein kinase family. STE20 subfamily. Mg(2+) is required as a cofactor.

It carries out the reaction L-seryl-[protein] + ATP = O-phospho-L-seryl-[protein] + ADP + H(+). The catalysed reaction is L-threonyl-[protein] + ATP = O-phospho-L-threonyl-[protein] + ADP + H(+). The protein is Probable serine/threonine-protein kinase mkcE of Dictyostelium discoideum (Social amoeba).